Consider the following 619-residue polypeptide: Probable galacturonosyltransferase 7 (619 aa).

Residues 1–19 are Cytoplasmic-facing; that stretch reads MKGGGGGGGGGGGGKRRWK. A helical; Signal-anchor for type II membrane protein transmembrane segment spans residues 20–40; that stretch reads VLVIGVLVLVILSMLVPLAFL. The Lumenal portion of the chain corresponds to 41-619; sequence LGLHNGFHSP…RFLSDCNVNP (579 aa). N-linked (GlcNAc...) asparagine glycans are attached at residues Asn-68, Asn-106, Asn-132, Asn-343, and Asn-421. The interval 95–139 is disordered; the sequence is KSDINVGSRDVNATSGTDSKKRGLPVSPTVVANPSPANKTKSEAS. Positions 124–139 are enriched in polar residues; the sequence is VVANPSPANKTKSEAS.

The protein belongs to the glycosyltransferase 8 family. In terms of tissue distribution, expressed in roots, inflorescences, flowers, siliques, leaves and stems.

Its subcellular location is the golgi apparatus membrane. It participates in glycan metabolism; pectin biosynthesis. Its function is as follows. May be involved in pectin biosynthesis. This chain is Probable galacturonosyltransferase 7 (GAUT7), found in Arabidopsis thaliana (Mouse-ear cress).